Reading from the N-terminus, the 479-residue chain is Glutamyl-tRNA(Gln) amidotransferase subunit A (479 aa).

Catalysis depends on charge relay system residues Lys-71 and Ser-146. Residue Ser-170 is the Acyl-ester intermediate of the active site.

It belongs to the amidase family. GatA subfamily. In terms of assembly, heterotrimer of A, B and C subunits.

It catalyses the reaction L-glutamyl-tRNA(Gln) + L-glutamine + ATP + H2O = L-glutaminyl-tRNA(Gln) + L-glutamate + ADP + phosphate + H(+). Allows the formation of correctly charged Gln-tRNA(Gln) through the transamidation of misacylated Glu-tRNA(Gln) in organisms which lack glutaminyl-tRNA synthetase. The reaction takes place in the presence of glutamine and ATP through an activated gamma-phospho-Glu-tRNA(Gln). The polypeptide is Glutamyl-tRNA(Gln) amidotransferase subunit A (Lactobacillus gasseri (strain ATCC 33323 / DSM 20243 / BCRC 14619 / CIP 102991 / JCM 1131 / KCTC 3163 / NCIMB 11718 / NCTC 13722 / AM63)).